The chain runs to 420 residues: Gamma-glutamyl phosphate reductase (420 aa).

Belongs to the gamma-glutamyl phosphate reductase family.

It localises to the cytoplasm. It catalyses the reaction L-glutamate 5-semialdehyde + phosphate + NADP(+) = L-glutamyl 5-phosphate + NADPH + H(+). The protein operates within amino-acid biosynthesis; L-proline biosynthesis; L-glutamate 5-semialdehyde from L-glutamate: step 2/2. Functionally, catalyzes the NADPH-dependent reduction of L-glutamate 5-phosphate into L-glutamate 5-semialdehyde and phosphate. The product spontaneously undergoes cyclization to form 1-pyrroline-5-carboxylate. This chain is Gamma-glutamyl phosphate reductase, found in Cereibacter sphaeroides (strain KD131 / KCTC 12085) (Rhodobacter sphaeroides).